Consider the following 414-residue polypeptide: Succinylornithine transaminase (414 aa).

Lysine 260 is modified (N6-(pyridoxal phosphate)lysine).

It belongs to the class-III pyridoxal-phosphate-dependent aminotransferase family. AstC subfamily. It depends on pyridoxal 5'-phosphate as a cofactor.

The enzyme catalyses N(2)-succinyl-L-ornithine + 2-oxoglutarate = N-succinyl-L-glutamate 5-semialdehyde + L-glutamate. The protein operates within amino-acid degradation; L-arginine degradation via AST pathway; L-glutamate and succinate from L-arginine: step 3/5. In terms of biological role, catalyzes the transamination of N(2)-succinylornithine and alpha-ketoglutarate into N(2)-succinylglutamate semialdehyde and glutamate. Can also act as an acetylornithine aminotransferase. This chain is Succinylornithine transaminase, found in Yersinia pseudotuberculosis serotype O:1b (strain IP 31758).